The sequence spans 664 residues: Probable urea active transporter 1 (664 aa).

16 helical membrane-spanning segments follow: residues 9–29 (SVGY…MIFV), 56–76 (GLVA…LTSA), 86–106 (GAFW…VLAI), 132–152 (GVFL…LLCG), 165–185 (TVAV…FGGI), 189–209 (FLTD…FSLA), 252–272 (GAIF…VDNG), 290–310 (ILGG…MGLV), 327–347 (MSDL…ALMG), 353–373 (ATLL…LIAV), 395–415 (LLYT…GFAT), 428–448 (YLLM…VMLF), 454–474 (IAVT…WLVV), 496–516 (AGNV…SIIF), 555–575 (VAAL…MYGT), and 587–607 (WVVV…IFPL).

It belongs to the sodium:solute symporter (SSF) (TC 2.A.21) family.

The protein resides in the membrane. In terms of biological role, involved in active transport of urea. This chain is Probable urea active transporter 1 (dur3-1), found in Schizosaccharomyces pombe (strain 972 / ATCC 24843) (Fission yeast).